Consider the following 236-residue polypeptide: UPF0177 protein YaiH (236 aa).

The next 6 membrane-spanning stretches (helical) occupy residues 16–36, 51–71, 90–110, 131–151, 180–200, and 210–230; these read YFSL…ILGY, ATAT…GILI, ILFL…TFTY, IVFP…FEEA, TGAN…TLIY, and ILVH…LQTI.

Belongs to the UPF0177 family.

Its subcellular location is the cell membrane. This is UPF0177 protein YaiH (yaiH) from Lactococcus lactis subsp. lactis (strain IL1403) (Streptococcus lactis).